A 448-amino-acid polypeptide reads, in one-letter code: Probable protein phosphatase 2C 74 (448 aa).

The segment at 1–48 (MGSCLSSSGGGGSRRSLHGSPHVPGPGRRKRPPKRRPGSCSSSFDNTE) is disordered. A lipid anchor (N-myristoyl glycine) is attached at Gly2. Residues 27–37 (GRRKRPPKRRP) are compositionally biased toward basic residues. Residues 67 to 384 (TVSLFSQQGK…DDCAVVCLFL (318 aa)) enclose the PPM-type phosphatase domain. Residues Asp103, Gly104, Asp329, and Asp375 each contribute to the Mn(2+) site. A disordered region spans residues 401 to 431 (HINNGVTEPEPDTASSSTPDSGTGSPELNGV). A compositionally biased stretch (low complexity) spans 412–426 (DTASSSTPDSGTGSP).

Belongs to the PP2C family. As to quaternary structure, interacts with KIN10. Requires Mg(2+) as cofactor. The cofactor is Mn(2+). Expressed in the whole plant.

The protein resides in the cell membrane. The enzyme catalyses O-phospho-L-seryl-[protein] + H2O = L-seryl-[protein] + phosphate. It catalyses the reaction O-phospho-L-threonyl-[protein] + H2O = L-threonyl-[protein] + phosphate. Acts as a protein phosphatase. In Arabidopsis thaliana (Mouse-ear cress), this protein is Probable protein phosphatase 2C 74.